We begin with the raw amino-acid sequence, 348 residues long: Probable dual-specificity RNA methyltransferase RlmN (348 aa).

Glu90 (proton acceptor) is an active-site residue. In terms of domain architecture, Radical SAM core spans 96 to 324 (AAERLTVCVS…ASVRHTRGLE (229 aa)). A disulfide bond links Cys103 and Cys329. Cys110, Cys114, and Cys117 together coordinate [4Fe-4S] cluster. S-adenosyl-L-methionine-binding positions include 157–158 (GE), Ser187, 210–212 (SLH), and Asn286. Residue Cys329 is the S-methylcysteine intermediate of the active site.

This sequence belongs to the radical SAM superfamily. RlmN family. [4Fe-4S] cluster is required as a cofactor.

The protein resides in the cytoplasm. The enzyme catalyses adenosine(2503) in 23S rRNA + 2 reduced [2Fe-2S]-[ferredoxin] + 2 S-adenosyl-L-methionine = 2-methyladenosine(2503) in 23S rRNA + 5'-deoxyadenosine + L-methionine + 2 oxidized [2Fe-2S]-[ferredoxin] + S-adenosyl-L-homocysteine. It catalyses the reaction adenosine(37) in tRNA + 2 reduced [2Fe-2S]-[ferredoxin] + 2 S-adenosyl-L-methionine = 2-methyladenosine(37) in tRNA + 5'-deoxyadenosine + L-methionine + 2 oxidized [2Fe-2S]-[ferredoxin] + S-adenosyl-L-homocysteine. In terms of biological role, specifically methylates position 2 of adenine 2503 in 23S rRNA and position 2 of adenine 37 in tRNAs. This is Probable dual-specificity RNA methyltransferase RlmN from Gloeobacter violaceus (strain ATCC 29082 / PCC 7421).